The following is a 344-amino-acid chain: DNA polymerase III subunit delta (344 aa).

The protein belongs to the DNA polymerase HolA subunit family. In terms of assembly, DNA polymerase III contains a core (composed of alpha, epsilon and theta chains) that associates with a tau subunit. This core dimerizes to form the POLIII' complex. PolIII' associates with the gamma complex (composed of gamma, delta, delta', psi and chi chains) and with the beta chain to form the complete DNA polymerase III complex.

The catalysed reaction is DNA(n) + a 2'-deoxyribonucleoside 5'-triphosphate = DNA(n+1) + diphosphate. Functionally, DNA polymerase III is a complex, multichain enzyme responsible for most of the replicative synthesis in bacteria. This DNA polymerase also exhibits 3' to 5' exonuclease activity. The delta subunit seems to interact with the gamma subunit to transfer the beta subunit on the DNA. The protein is DNA polymerase III subunit delta (holA) of Haemophilus influenzae (strain ATCC 51907 / DSM 11121 / KW20 / Rd).